The following is a 351-amino-acid chain: Histidine protein kinase SaeS (351 aa).

2 consecutive transmembrane segments (helical) span residues 9–29 and 40–60; these read IIIG…IAYI and TLTL…SIFI. The 54-residue stretch at 61–114 folds into the HAMP domain; it reads NPLIQKIKQFNIKTKQFANGNYASNDKTFNSPKEIYELNQSFNKMASEITQQMN. The 220-residue stretch at 129 to 348 folds into the Histidine kinase domain; that stretch reads NLAHDLKTPL…TMTVTLHKLD (220 aa). H132 is modified (phosphohistidine; by autocatalysis).

Autophosphorylated.

It localises to the cell membrane. The enzyme catalyses ATP + protein L-histidine = ADP + protein N-phospho-L-histidine.. Member of the two-component regulatory system SaeR/SaeS involved in the regulation of staphylococcal virulence factors in a strain-dependent fashion. Probably functions as a membrane-associated protein kinase that upon sensing the appropriate signal, autophosphorylates and in turn activates the cytosolic response regulator SaeR. This is Histidine protein kinase SaeS (saeS) from Staphylococcus aureus (strain USA300).